We begin with the raw amino-acid sequence, 292 residues long: MNPFWNMSSAAVRKRSDNDEKIATGDQKISPPRSSSAKKQLPSIPKNAVPITKPISPSPSVQPTNGTHASYGPFYLEYSLLAEFTLVVKQKLPGVYVQPSYRSALMWFGVIFIRHGLYQDGVFKFTVYIPDNYPDGECPRLVFDVPVFHPLVDPVSGELDVKRAFTKWRRNHNHIWQVLMYARRIFYKIDTTSPLNPEAAVLYEKDVQLFKSKVVDSVKLCNSHLFDQPKIEDPYAIIFSPWNPVLHDDARERMLAQKKSEEQSKGLHVSGLSWVKPGSVLPFSKEENSLQT.

Positions 1–64 are disordered; that stretch reads MNPFWNMSSA…ISPSPSVQPT (64 aa). The span at 14–23 shows a compositional bias: basic and acidic residues; that stretch reads KRSDNDEKIA. Residues 75 to 223 enclose the UBC core domain; sequence YLEYSLLAEF…VVDSVKLCNS (149 aa). The tract at residues 273 to 292 is disordered; the sequence is SWVKPGSVLPFSKEENSLQT.

Belongs to the ubiquitin-conjugating enzyme family. FTS subfamily.

It is found in the cytoplasm. Its subcellular location is the cell membrane. In terms of biological role, may function to promote vesicle trafficking and/or fusion. May also regulate apoptosis. This chain is AKT-interacting protein (aktip), found in Xenopus tropicalis (Western clawed frog).